The sequence spans 349 residues: DNA-directed RNA polymerase subunit alpha (349 aa).

Residues 1–226 are alpha N-terminal domain (alpha-NTD); the sequence is MLIAQRPTLI…GLFGLAQELN (226 aa). The interval 241–349 is alpha C-terminal domain (alpha-CTD); it reads AALAADLALP…GAEFIETEQY (109 aa). The disordered stretch occupies residues 309–349; that stretch reads KDSPPGFDPRQAVDTYGTDAYSPSFSDPSDDGAEFIETEQY. Residues 336–349 show a composition bias toward acidic residues; that stretch reads PSDDGAEFIETEQY.

It belongs to the RNA polymerase alpha chain family. In terms of assembly, homodimer. The RNAP catalytic core consists of 2 alpha, 1 beta, 1 beta' and 1 omega subunit. When a sigma factor is associated with the core the holoenzyme is formed, which can initiate transcription.

The catalysed reaction is RNA(n) + a ribonucleoside 5'-triphosphate = RNA(n+1) + diphosphate. Functionally, DNA-dependent RNA polymerase catalyzes the transcription of DNA into RNA using the four ribonucleoside triphosphates as substrates. The sequence is that of DNA-directed RNA polymerase subunit alpha from Frankia casuarinae (strain DSM 45818 / CECT 9043 / HFP020203 / CcI3).